A 1230-amino-acid polypeptide reads, in one-letter code: Cullin-associated NEDD8-dissociated protein 1 (1230 aa).

Ala2 is modified (N-acetylalanine). HEAT repeat units lie at residues 2–39 (ASAS…KDSI), 44–81 (DSER…KVKE), 83–119 (QVET…ELPP), 131–165 (CKKI…LSRQ), 171–208 (NFHP…SCGN), 210–247 (VFVD…QAGH), 248–282 (RIGE…FESF), 289–366 (EVYP…TRHE), 370–407 (EFYK…QTRP), 424–467 (PLTM…VLPG), 471–510 (QHIP…NHSP), and 515–552 (PHVQ…VIRP). Lys55 is modified (N6-acetyllysine). Residues 315 to 344 (DEDEDENAMDADGGDDDDQGSDDEYSDDDD) are disordered. The residue at position 335 (Ser335) is a Phosphoserine. Ser558 carries the phosphoserine modification. 15 HEAT repeats span residues 563–602 (PYIK…NLGD), 606–643 (SDLP…LKID), 646–683 (PVLG…NYSD), 688–725 (AMID…VYPS), 729–768 (KISG…TGTN), 770–808 (LGYM…ALTR), 809–845 (ACPK…LGEV), 852–889 (SGQL…GNLP), 890–927 (EYLP…GLKP), 928–960 (YVEN…KLTL), 961–998 (IDPE…DHPQ), 1002–1039 (PLLK…NKPS), 1043–1097 (DLLD…DSCL), 1099–1133 (RLDI…LSTL), and 1140–1189 (QRLD…IPEA). Residue Lys971 is modified to N6-acetyllysine.

It belongs to the CAND family. As to quaternary structure, interacts with TBP. Part of a complex that contains CUL1 and RBX1. Interacts with unneddylated cullins: interacts with CUL1, CUL2, CUL3, CUL4A, CUL4B and CUL5. Does not bind neddylated CUL1. Interaction with cullins is abolished in presence of COMMD1, which antagonizes with CAND1 for interacting with cullins. Interacts with ERCC6. Interacts with DCUN1D1, DCUN1D2, DCUN1D3, DCUN1D4 and DCUN1D5; these interactions are bridged by cullins and strongly inhibits the neddylation of cullins.

The protein localises to the cytoplasm. It localises to the nucleus. Its function is as follows. Key assembly factor of SCF (SKP1-CUL1-F-box protein) E3 ubiquitin ligase complexes that promotes the exchange of the substrate-recognition F-box subunit in SCF complexes, thereby playing a key role in the cellular repertoire of SCF complexes. Acts as a F-box protein exchange factor. The exchange activity of CAND1 is coupled with cycles of neddylation conjugation: in the deneddylated state, cullin-binding CAND1 binds CUL1-RBX1, increasing dissociation of the SCF complex and promoting exchange of the F-box protein. Probably plays a similar role in other cullin-RING E3 ubiquitin ligase complexes. This Bos taurus (Bovine) protein is Cullin-associated NEDD8-dissociated protein 1 (CAND1).